A 150-amino-acid chain; its full sequence is MHIWVDADACPAVIKDILFRAAQRWQRPLTLVANQMLRTPPSPLIRAIQVPRGFDVADGYIVEHAGSGDLVITGDIPLAAQVLEKQALVLSPRGERYTADTIRERLSMRDMMEELRSAGIDTGGPAAFSQADRRAFANALDRLMLASARA.

The protein belongs to the UPF0178 family.

In Bordetella petrii (strain ATCC BAA-461 / DSM 12804 / CCUG 43448), this protein is UPF0178 protein Bpet3884.